We begin with the raw amino-acid sequence, 138 residues long: Basic phospholipase A2 homolog ammodytin L (138 aa).

The signal sequence occupies residues 1 to 16 (MRILWIVAVCLIGVEG). 7 disulfide bridges follow: cysteine 42-cysteine 131, cysteine 44-cysteine 60, cysteine 59-cysteine 111, cysteine 65-cysteine 138, cysteine 66-cysteine 104, cysteine 73-cysteine 97, and cysteine 91-cysteine 102. The tract at residues 121–133 (KKYKVYLRFKCKG) is important for membrane-damaging activities in eukaryotes and bacteria; heparin-binding.

It belongs to the phospholipase A2 family. Group II subfamily. S49 sub-subfamily. As to expression, expressed by the venom gland.

Its subcellular location is the secreted. Its function is as follows. Snake venom phospholipase A2 homolog that lacks enzymatic activity. Is very active in inducing myonecrosis in vivo and shows a potent calcium-independent membrane-damaging activity in vitro, most probably by binding and incorporating in the membrane. Also acts as a presynaptic neurotoxin. A model of myotoxic mechanism has been proposed: an apo Lys49-PLA2 is activated by the entrance of a hydrophobic molecule (e.g. fatty acid) at the hydrophobic channel of the protein leading to a reorientation of a monomer. This reorientation causes a transition between 'inactive' to 'active' states, causing alignment of C-terminal and membrane-docking sites (MDoS) side-by-side and putting the membrane-disruption sites (MDiS) in the same plane, exposed to solvent and in a symmetric position for both monomers. The MDoS region stabilizes the toxin on membrane by the interaction of charged residues with phospholipid head groups. Subsequently, the MDiS region destabilizes the membrane with penetration of hydrophobic residues. This insertion causes a disorganization of the membrane, allowing an uncontrolled influx of ions (i.e. calcium and sodium), and eventually triggering irreversible intracellular alterations and cell death. This Vipera ammodytes ammodytes (Western sand viper) protein is Basic phospholipase A2 homolog ammodytin L.